The following is a 456-amino-acid chain: Palmitoyltransferase PFA4 (456 aa).

Residues 1-9 (MAARNWSRV) are Cytoplasmic-facing. A helical transmembrane segment spans residues 10–30 (WVGGTVILISFIAFSSQIFVI). Over 31–37 (WPWYGRE) the chain is Lumenal. A helical membrane pass occupies residues 38–58 (ISLDLLMLLVPLNLAAFMIFW). At 59–138 (NYRLCVITSP…GNCVGFYNQG (80 aa)) the chain is on the cytoplasmic side. Residues 95-145 (RYCKNCAHYKPPRAHHCRQCKTCWLKLDHHCPWIGNCVGFYNQGHFIRFLL) form the DHHC domain. The active-site S-palmitoyl cysteine intermediate is the Cys125. A helical transmembrane segment spans residues 139-159 (HFIRFLLWVDIGTTFHLIIMV). Residues 160–176 (RRVLYIAEYYHEPTLAD) are Lumenal-facing. The chain crosses the membrane as a helical span at residues 177–197 (VLFLVFNFATCVPVWLCVGMF). The Cytoplasmic segment spans residues 198-456 (SIYHVYLACG…DPEEESGYTH (259 aa)). The segment at 284 to 377 (PPQDPSRLPN…YDHYDEGPMY (94 aa)) is disordered. Residues 285–298 (PQDPSRLPNPPPIP) show a composition bias toward pro residues. The span at 309-321 (NGFNPNLRPTNSL) shows a compositional bias: polar residues. The span at 337-352 (SHEQGRHYSSGDERDN) shows a compositional bias: basic and acidic residues.

The protein belongs to the DHHC palmitoyltransferase family. PFA4 subfamily.

It is found in the endoplasmic reticulum membrane. The catalysed reaction is L-cysteinyl-[protein] + hexadecanoyl-CoA = S-hexadecanoyl-L-cysteinyl-[protein] + CoA. Functionally, mediates the reversible addition of palmitate to target proteins, thereby regulating their membrane association and biological function. Responsible for the modification of a subset of proteins that are critical in cryptococcal pathogenesis, with substrates involved in cell wall synthesis, signal transduction, and membrane trafficking. Palmitoylates chitin synthase CHS3. This chain is Palmitoyltransferase PFA4, found in Cryptococcus neoformans var. grubii serotype A (strain H99 / ATCC 208821 / CBS 10515 / FGSC 9487) (Filobasidiella neoformans var. grubii).